A 422-amino-acid chain; its full sequence is Elongation factor 1-alpha (422 aa).

Residues K5–S221 form the tr-type G domain. Residues G14–S21 form a G1 region. G14–S21 serves as a coordination point for GTP. A Mg(2+)-binding site is contributed by S21. The interval G70–D74 is G2. The tract at residues D91 to G94 is G3. GTP is bound by residues D91–H95 and N146–D149. The interval N146–D149 is G4. The segment at S185–F187 is G5.

The protein belongs to the TRAFAC class translation factor GTPase superfamily. Classic translation factor GTPase family. EF-Tu/EF-1A subfamily.

It is found in the cytoplasm. It carries out the reaction GTP + H2O = GDP + phosphate + H(+). Functionally, GTP hydrolase that promotes the GTP-dependent binding of aminoacyl-tRNA to the A-site of ribosomes during protein biosynthesis. This chain is Elongation factor 1-alpha, found in Methanosarcina barkeri (strain Fusaro / DSM 804).